A 242-amino-acid polypeptide reads, in one-letter code: MLWLDLGNTRLKYWLTDDIGQIVSHDAKQHLQAPAELLMGLTDRFERYAPDFIGISSVLGDDLNIKVSETLSRLNIPFEFVHVDANYPLMKSAYNDEQLGCDRWLQMLGAVDKTKRQCLIGCGTAITIDLIDHATHLGGYIFPSIYLQRESLFSGTKQITISNGTFDSVSQGITTQDAVHRGILLSIVGAINEISTRHPNFEVIMTGGDAAIIAQHVNRPVRLRDDLLLNGLARYFDHSKQS.

5–12 (DLGNTRLK) contacts ATP. Residues Tyr94 and 100-103 (GCDR) each bind substrate. Catalysis depends on Asp102, which acts as the Proton acceptor. An ATP-binding site is contributed by Thr124. Thr175 is a binding site for substrate.

This sequence belongs to the type III pantothenate kinase family. In terms of assembly, homodimer. Requires NH4(+) as cofactor. It depends on K(+) as a cofactor.

It localises to the cytoplasm. The catalysed reaction is (R)-pantothenate + ATP = (R)-4'-phosphopantothenate + ADP + H(+). It functions in the pathway cofactor biosynthesis; coenzyme A biosynthesis; CoA from (R)-pantothenate: step 1/5. In terms of biological role, catalyzes the phosphorylation of pantothenate (Pan), the first step in CoA biosynthesis. This is Type III pantothenate kinase from Psychrobacter arcticus (strain DSM 17307 / VKM B-2377 / 273-4).